Here is a 905-residue protein sequence, read N- to C-terminus: Alanine--tRNA ligase (905 aa).

Positions 569, 573, 693, and 697 each coordinate Zn(2+).

It belongs to the class-II aminoacyl-tRNA synthetase family. The cofactor is Zn(2+).

The protein resides in the cytoplasm. The catalysed reaction is tRNA(Ala) + L-alanine + ATP = L-alanyl-tRNA(Ala) + AMP + diphosphate. Functionally, catalyzes the attachment of alanine to tRNA(Ala) in a two-step reaction: alanine is first activated by ATP to form Ala-AMP and then transferred to the acceptor end of tRNA(Ala). Also edits incorrectly charged Ser-tRNA(Ala) and Gly-tRNA(Ala) via its editing domain. This Roseiflexus castenholzii (strain DSM 13941 / HLO8) protein is Alanine--tRNA ligase.